The following is a 248-amino-acid chain: MHIIQNTITILNNFVDISGVEVGQHLYWQIGNFEVHGQVLLTSWFVLAVLLGLAVLTVRDPQTIPTGQQNFAEYLLEFIRDLARTQIGEEEYISWVPFIGTLFLFIFVSNWSGALVPWGVVKLPHGELAAPTNDINTTVALALLTSVAYFYAGLAKKGLSFFGKYIQPTPILLPINILEDFTKPLSLSFRLFGNILADELVVAVLVSLVPLVVPIPVMLLGLFTSGIQALIFATLAAAYIGESLENHH.

5 helical membrane-spanning segments follow: residues 38–58, 96–116, 135–155, 200–220, and 221–241; these read QVLL…VLTV, VPFI…GALV, INTT…AGLA, LVVA…VMLL, and GLFT…AYIG.

The protein belongs to the ATPase A chain family. In terms of assembly, F-type ATPases have 2 components, CF(1) - the catalytic core - and CF(0) - the membrane proton channel. CF(1) has five subunits: alpha(3), beta(3), gamma(1), delta(1), epsilon(1). CF(0) has four main subunits: a, b, b' and c.

The protein resides in the plastid. It localises to the chloroplast thylakoid membrane. Its function is as follows. Key component of the proton channel; it plays a direct role in the translocation of protons across the membrane. The chain is ATP synthase subunit a, chloroplastic from Welwitschia mirabilis (Tree tumbo).